The following is a 179-amino-acid chain: Large ribosomal subunit protein uL5 (179 aa).

It belongs to the universal ribosomal protein uL5 family. In terms of assembly, part of the 50S ribosomal subunit; part of the 5S rRNA/L5/L18/L25 subcomplex. Contacts the 5S rRNA and the P site tRNA. Forms a bridge to the 30S subunit in the 70S ribosome.

Functionally, this is one of the proteins that bind and probably mediate the attachment of the 5S RNA into the large ribosomal subunit, where it forms part of the central protuberance. In the 70S ribosome it contacts protein S13 of the 30S subunit (bridge B1b), connecting the 2 subunits; this bridge is implicated in subunit movement. Contacts the P site tRNA; the 5S rRNA and some of its associated proteins might help stabilize positioning of ribosome-bound tRNAs. The sequence is that of Large ribosomal subunit protein uL5 from Agathobacter rectalis (strain ATCC 33656 / DSM 3377 / JCM 17463 / KCTC 5835 / VPI 0990) (Eubacterium rectale).